The sequence spans 116 residues: Small ribosomal subunit protein uS13m (116 aa).

A disordered region spans residues 92-116 (HQDGSPLRGQRTHTNARTARKQIRK).

Belongs to the universal ribosomal protein uS13 family. In terms of assembly, part of the small ribosomal subunit.

The protein resides in the mitochondrion. Its function is as follows. Located at the top of the head of the small subunit, it contacts several helices of the 18S rRNA. The protein is Small ribosomal subunit protein uS13m (RPS13) of Triticum aestivum (Wheat).